Reading from the N-terminus, the 245-residue chain is Large ribosomal subunit protein uL4 (245 aa).

The span at 1–13 (MSRVATSDPSVTA) shows a compositional bias: polar residues. 3 disordered regions span residues 1-28 (MSRVATSDPSVTARTVAVHAPNGGEGGS), 56-114 (ARQG…QRTP), and 224-245 (TSTAGTEAAAGTEGVAGAEENK). A compositionally biased stretch (basic and acidic residues) spans 59 to 71 (GTHDTKTRGEVRG). A compositionally biased stretch (basic residues) spans 72 to 83 (GGRKPYRQKGTG).

It belongs to the universal ribosomal protein uL4 family. Part of the 50S ribosomal subunit.

In terms of biological role, one of the primary rRNA binding proteins, this protein initially binds near the 5'-end of the 23S rRNA. It is important during the early stages of 50S assembly. It makes multiple contacts with different domains of the 23S rRNA in the assembled 50S subunit and ribosome. Functionally, forms part of the polypeptide exit tunnel. This chain is Large ribosomal subunit protein uL4, found in Frankia casuarinae (strain DSM 45818 / CECT 9043 / HFP020203 / CcI3).